The sequence spans 434 residues: Methylenetetrahydrofolate--tRNA-(uracil-5-)-methyltransferase TrmFO (434 aa).

Residue Gly-10–Gly-15 participates in FAD binding.

It belongs to the MnmG family. TrmFO subfamily. The cofactor is FAD.

The protein resides in the cytoplasm. It catalyses the reaction uridine(54) in tRNA + (6R)-5,10-methylene-5,6,7,8-tetrahydrofolate + NADH + H(+) = 5-methyluridine(54) in tRNA + (6S)-5,6,7,8-tetrahydrofolate + NAD(+). It carries out the reaction uridine(54) in tRNA + (6R)-5,10-methylene-5,6,7,8-tetrahydrofolate + NADPH + H(+) = 5-methyluridine(54) in tRNA + (6S)-5,6,7,8-tetrahydrofolate + NADP(+). Functionally, catalyzes the folate-dependent formation of 5-methyl-uridine at position 54 (M-5-U54) in all tRNAs. This chain is Methylenetetrahydrofolate--tRNA-(uracil-5-)-methyltransferase TrmFO, found in Bacillus cereus (strain Q1).